A 1317-amino-acid polypeptide reads, in one-letter code: DNA-directed RNA polymerase subunit beta' (1317 aa).

4 residues coordinate Zn(2+): cysteine 60, cysteine 62, cysteine 75, and cysteine 78. Residues aspartate 535, aspartate 537, and aspartate 539 each contribute to the Mg(2+) site. The Zn(2+) site is built by cysteine 890, cysteine 967, cysteine 974, and cysteine 977.

It belongs to the RNA polymerase beta' chain family. The RNAP catalytic core consists of 2 alpha, 1 beta, 1 beta' and 1 omega subunit. When a sigma factor is associated with the core the holoenzyme is formed, which can initiate transcription. Mg(2+) is required as a cofactor. Requires Zn(2+) as cofactor.

It carries out the reaction RNA(n) + a ribonucleoside 5'-triphosphate = RNA(n+1) + diphosphate. In terms of biological role, DNA-dependent RNA polymerase catalyzes the transcription of DNA into RNA using the four ribonucleoside triphosphates as substrates. The polypeptide is DNA-directed RNA polymerase subunit beta' (Mycolicibacterium smegmatis (strain ATCC 700084 / mc(2)155) (Mycobacterium smegmatis)).